Reading from the N-terminus, the 312-residue chain is Acyl-CoA C20 Delta5-desaturase (312 aa).

The next 2 helical transmembrane spans lie at 45–65 (VFHILFIGGLHVLCLFAPSTF) and 69–89 (SFWVCFALYAICGVFGTTLSF). Fe cation is bound by residues H90, H95, H127, H130, and H131. Residues 90-95 (HRNLTH) carry the Histidine box-1 motif. Residues 127-131 (HRYHH) carry the Histidine box-2 motif. Residues 193 to 213 (LQAALLYLFGGFPFIVWGMAV) form a helical membrane-spanning segment. Residues H230, H259, H262, and H263 each coordinate Fe cation. The Histidine box-3 signature appears at 259 to 263 (HNNHH).

It belongs to the fatty acid desaturase type 1 family. The cofactor is Fe(2+).

The protein localises to the membrane. It carries out the reaction (11Z,14Z)-eicosadienoyl-CoA + AH2 + O2 = (5Z,11Z,14Z)-eicosatrienoyl-CoA + A + 2 H2O. The catalysed reaction is (11Z,14Z,17Z)-eicosatrienoyl-CoA + AH2 + O2 = (5Z,11Z,14Z,17Z)-eicosatetraenoyl-CoA + A + 2 H2O. It participates in lipid metabolism; polyunsaturated fatty acid biosynthesis. Catalyzes the desaturation of 20:2Delta(11,14) and 20:3Delta(11,14,17) to generate sciadonic acid (20:3Delta(5,11,14)) and juniperonic acid (20:4Delta(5,11,14,17)). The polypeptide is Acyl-CoA C20 Delta5-desaturase (Anemone leveillei (Windflower)).